The sequence spans 634 residues: Zinc finger and BTB domain-containing protein 22 (634 aa).

One can recognise a BTB domain in the interval 57–121 (CDVSIRVQGR…AYTGRLSMAA (65 aa)). Disordered regions lie at residues 167–247 (TVPG…APVV) and 308–461 (APTP…GTSV). The segment covering 180 to 198 (TVAPATMGSARSHASSRAS) has biased composition (low complexity). A compositionally biased stretch (polar residues) spans 199 to 209 (ENQSPSSSNYF). A Phosphoserine modification is found at Ser202. A compositionally biased stretch (low complexity) spans 217–229 (FSSSSQEAFAASA). Over residues 317 to 340 (PDLEEEEEEEDLVLTCEDDEDEEL) the composition is skewed to acidic residues. Positions 452–461 (GAVTVGGTSV) are enriched in low complexity. Residues 486-507 (FLCHCGKAFSHKSMRDRHVNMH) form a C2H2-type 1; atypical zinc finger. C2H2-type zinc fingers lie at residues 513–535 (FDCP…MKTH) and 541–562 (YECG…HRGH). The interval 568-634 (RLGGVGAVPG…MGFGGGGGAN (67 aa)) is disordered. Positions 608–618 (PPSSRRVWSPP) are enriched in low complexity.

This sequence belongs to the krueppel C2H2-type zinc-finger protein family.

The protein localises to the nucleus. May be involved in transcriptional regulation. The sequence is that of Zinc finger and BTB domain-containing protein 22 (ZBTB22) from Homo sapiens (Human).